Here is a 431-residue protein sequence, read N- to C-terminus: Salivary plasminogen activator beta (431 aa).

An N-terminal signal peptide occupies residues 1 to 36; that stretch reads MVNTMKTKLLCVLLLCGAVFSLPRQETYRQLARGSR. The EGF-like domain occupies 37–75; the sequence is AYGGCSELRCFNGGTCWQAASFSDFVCQCPKGYTGKQCE. Disulfide bonds link cysteine 41-cysteine 52, cysteine 46-cysteine 63, cysteine 65-cysteine 74, cysteine 82-cysteine 163, cysteine 103-cysteine 145, cysteine 134-cysteine 158, cysteine 168-cysteine 299, cysteine 211-cysteine 227, cysteine 219-cysteine 288, cysteine 313-cysteine 388, cysteine 345-cysteine 361, and cysteine 378-cysteine 406. One can recognise a Kringle domain in the interval 82 to 163; it reads CYKDQGVTYR…ILEFCSVPVC (82 aa). An N-linked (GlcNAc...) asparagine glycan is attached at asparagine 139. The region spanning 180–430 is the Peptidase S1 domain; it reads STGGLFTDIT…YLGWIRDNMR (251 aa). Active-site charge relay system residues include histidine 226 and aspartate 275. An N-linked (GlcNAc...) asparagine glycan is attached at asparagine 352. The active-site Charge relay system is the serine 382.

It belongs to the peptidase S1 family. As to quaternary structure, monomer.

The protein resides in the secreted. It carries out the reaction Specific cleavage of Arg-|-Val bond in plasminogen to form plasmin.. Its function is as follows. Probably essential to support the feeding habits of this exclusively haematophagous animal. Probable potent thrombolytic agent. This Desmodus rotundus (Vampire bat) protein is Salivary plasminogen activator beta.